The chain runs to 483 residues: Alginate biosynthesis protein AlgA (483 aa).

This sequence belongs to the mannose-6-phosphate isomerase type 2 family. As to quaternary structure, monomer. Co(2+) serves as cofactor.

The enzyme catalyses D-mannose 6-phosphate = D-fructose 6-phosphate. It catalyses the reaction alpha-D-mannose 1-phosphate + GTP + H(+) = GDP-alpha-D-mannose + diphosphate. It participates in nucleotide-sugar biosynthesis; GDP-alpha-D-mannose biosynthesis; GDP-alpha-D-mannose from alpha-D-mannose 1-phosphate (GTP route): step 1/1. It functions in the pathway nucleotide-sugar biosynthesis; GDP-alpha-D-mannose biosynthesis; alpha-D-mannose 1-phosphate from D-fructose 6-phosphate: step 1/2. In terms of biological role, produces a precursor for alginate polymerization. The alginate layer provides a protective barrier against host immune defenses and antibiotics. This is Alginate biosynthesis protein AlgA (algA) from Pseudomonas syringae pv. tomato (strain ATCC BAA-871 / DC3000).